Here is a 315-residue protein sequence, read N- to C-terminus: MPDIKLFAGNATPSLAKKIADRLFCKLGDAVVGRFSDGEISVQINENVRGADVFIIQSTCAPTNDNLMELIVMVDALRRASAGRITAVIPYFGYARQDRRVRSARVPITAKVVADFLSSVGVDRVLTCDLHAEQIQGFFDVPVDNVFGSPVLLEDMLAKKLDNPVVVSPDIGGVVRARAVAKLLDDSDLAIIDKRRPQANVAQVMHIIGDVQGRDCIIVDDMIDTGGTLCKAAEALKEHGANRVFAYATHPVFSGKAAENITNSVIDEVIVTDTVPLSPEMLKVAKVTQLTMSAVLAEAIRRVSNEESISAMFSH.

Residues D37 to E39 and R96 to Q97 each bind ATP. Residues H131 and D170 each contribute to the Mg(2+) site. K194 is an active-site residue. D-ribose 5-phosphate contacts are provided by residues R196, D220, and D224 to T228.

Belongs to the ribose-phosphate pyrophosphokinase family. Class I subfamily. As to quaternary structure, homohexamer. It depends on Mg(2+) as a cofactor.

It is found in the cytoplasm. The enzyme catalyses D-ribose 5-phosphate + ATP = 5-phospho-alpha-D-ribose 1-diphosphate + AMP + H(+). The protein operates within metabolic intermediate biosynthesis; 5-phospho-alpha-D-ribose 1-diphosphate biosynthesis; 5-phospho-alpha-D-ribose 1-diphosphate from D-ribose 5-phosphate (route I): step 1/1. Its function is as follows. Involved in the biosynthesis of the central metabolite phospho-alpha-D-ribosyl-1-pyrophosphate (PRPP) via the transfer of pyrophosphoryl group from ATP to 1-hydroxyl of ribose-5-phosphate (Rib-5-P). The polypeptide is Ribose-phosphate pyrophosphokinase (Shewanella oneidensis (strain ATCC 700550 / JCM 31522 / CIP 106686 / LMG 19005 / NCIMB 14063 / MR-1)).